Reading from the N-terminus, the 115-residue chain is Kunitz-type trypsin inhibitor 1 (115 aa).

The protein belongs to the protease inhibitor I3 (leguminous Kunitz-type inhibitor) family.

Functionally, exhibits Kunitz trypsin protease inhibitor activity. The chain is Kunitz-type trypsin inhibitor 1 from Selenicereus undatus (Pitahaya).